A 474-amino-acid polypeptide reads, in one-letter code: Coiled-coil domain-containing protein 149 (474 aa).

Coiled-coil stretches lie at residues 1 to 199 (MANQ…RKNS) and 259 to 286 (IQHQRQTNKILGNRVAELEKKLRTLEVS). 2 disordered regions span residues 301 to 388 (SDPT…EEEV) and 405 to 474 (AELE…TVKT). A compositionally biased stretch (basic and acidic residues) spans 323–337 (TENKADPKDGEAQKQ). Over residues 343 to 353 (CAAAEALTAPE) the composition is skewed to low complexity. A coiled-coil region spans residues 385 to 414 (EEEVNSLGREIIKLTKEQAAAELEEVRRES).

This sequence belongs to the CCDC149 family.

This is Coiled-coil domain-containing protein 149 (CCDC149) from Homo sapiens (Human).